The sequence spans 952 residues: uncharacterized protein (952 aa).

A CheB-type methylesterase domain is found at 1 to 141 (MASLLARHTK…PWIADYLIRR (141 aa)). One can recognise a CheR-type methyltransferase domain in the interval 168-440 (VGQFDGLEPA…SARHRIWQAL (273 aa)). Positions 923–935 (HNQTEASPETSSG) are enriched in polar residues. Residues 923–952 (HNQTEASPETSSGGLPGSDGTGADGGAPRA) are disordered. Residues 936 to 952 (GLPGSDGTGADGGAPRA) show a composition bias toward gly residues.

This is an uncharacterized protein from Rhodobacter capsulatus (Rhodopseudomonas capsulata).